A 358-amino-acid chain; its full sequence is L-Ala-D/L-Glu epimerase (358 aa).

Substrate-binding residues include Arg24, Thr135, and Lys160. The Proton acceptor; specific for (R)-substrate epimerization role is filled by Lys162. Positions 190, 218, and 243 each coordinate Mg(2+). Catalysis depends on Lys267, which acts as the Proton acceptor; specific for (S)-substrate epimerization. Substrate-binding residues include Cys295, Asp320, and Asp322.

Belongs to the mandelate racemase/muconate lactonizing enzyme family. Mg(2+) is required as a cofactor.

It carries out the reaction L-alanyl-L-glutamate = L-alanyl-D-glutamate. The protein operates within cell wall degradation; peptidoglycan degradation. In terms of biological role, catalyzes the epimerization of L-Ala-D-Glu to L-Ala-L-Glu and has probably a role in the metabolism of the murein peptide, of which L-Ala-D-Glu is a component. Is also able to catalyze the epimerization of L-Ala-D-Asp. The sequence is that of L-Ala-D/L-Glu epimerase from Clostridium acetobutylicum (strain ATCC 824 / DSM 792 / JCM 1419 / IAM 19013 / LMG 5710 / NBRC 13948 / NRRL B-527 / VKM B-1787 / 2291 / W).